A 67-amino-acid chain; its full sequence is Prokaryotic ubiquitin-like protein Pup (67 aa).

The segment covering 1–36 has biased composition (low complexity); the sequence is MPQQFEQPQAQQAVTQEDDALATTQAATQTESTDQA. The tract at residues 1–38 is disordered; sequence MPQQFEQPQAQQAVTQEDDALATTQAATQTESTDQADV. Residues 23–61 are ARC ATPase binding; it reads TTQAATQTESTDQADVLDDILDDIESTLETNAEEYVNSF. E67 participates in a covalent cross-link: Isoglutamyl lysine isopeptide (Glu-Lys) (interchain with K-? in acceptor proteins).

It belongs to the prokaryotic ubiquitin-like protein family. Strongly interacts with the proteasome-associated ATPase ARC through a hydrophobic interface; the interacting region of Pup lies in its C-terminal half. There is one Pup binding site per ARC hexamer ring.

Its pathway is protein degradation; proteasomal Pup-dependent pathway. In terms of biological role, protein modifier that is covalently attached to lysine residues of substrate proteins, thereby targeting them for proteasomal degradation. The tagging system is termed pupylation. The sequence is that of Prokaryotic ubiquitin-like protein Pup from Bifidobacterium longum subsp. infantis (strain ATCC 15697 / DSM 20088 / JCM 1222 / NCTC 11817 / S12).